The sequence spans 169 residues: 6,7-dimethyl-8-ribityllumazine synthase (169 aa).

Residues Phe24, 58–60, and 82–84 each bind 5-amino-6-(D-ribitylamino)uracil; these read ALE and AVV. Position 87 to 88 (87 to 88) interacts with (2S)-2-hydroxy-3-oxobutyl phosphate; it reads ET. Catalysis depends on His90, which acts as the Proton donor. Asn115 provides a ligand contact to 5-amino-6-(D-ribitylamino)uracil. Arg129 contributes to the (2S)-2-hydroxy-3-oxobutyl phosphate binding site.

Belongs to the DMRL synthase family.

The catalysed reaction is (2S)-2-hydroxy-3-oxobutyl phosphate + 5-amino-6-(D-ribitylamino)uracil = 6,7-dimethyl-8-(1-D-ribityl)lumazine + phosphate + 2 H2O + H(+). It participates in cofactor biosynthesis; riboflavin biosynthesis; riboflavin from 2-hydroxy-3-oxobutyl phosphate and 5-amino-6-(D-ribitylamino)uracil: step 1/2. In terms of biological role, catalyzes the formation of 6,7-dimethyl-8-ribityllumazine by condensation of 5-amino-6-(D-ribitylamino)uracil with 3,4-dihydroxy-2-butanone 4-phosphate. This is the penultimate step in the biosynthesis of riboflavin. The sequence is that of 6,7-dimethyl-8-ribityllumazine synthase from Cupriavidus metallidurans (strain ATCC 43123 / DSM 2839 / NBRC 102507 / CH34) (Ralstonia metallidurans).